We begin with the raw amino-acid sequence, 201 residues long: NAD(P)H dehydrogenase (quinone) (201 aa).

Residues 7-192 (ILVLYYSMYG…SIARYQGEYV (186 aa)) form the Flavodoxin-like domain. FMN contacts are provided by residues 13–18 (SMYGHI) and 81–83 (TRF). Tyr-15 is an NAD(+) binding site. Trp-101 lines the substrate pocket. FMN is bound by residues 116–121 (STGTGG) and His-136.

It belongs to the WrbA family. Requires FMN as cofactor.

The catalysed reaction is a quinone + NADH + H(+) = a quinol + NAD(+). It carries out the reaction a quinone + NADPH + H(+) = a quinol + NADP(+). The polypeptide is NAD(P)H dehydrogenase (quinone) (Shigella sonnei (strain Ss046)).